Reading from the N-terminus, the 226-residue chain is Phosphoglycolate phosphatase (226 aa).

The active-site Nucleophile is aspartate 8. Aspartate 8 and aspartate 10 together coordinate Mg(2+). Substrate is bound at residue lysine 152. Mg(2+)-binding residues include aspartate 175 and aspartate 179.

This sequence belongs to the archaeal SPP-like hydrolase family. It depends on Mg(2+) as a cofactor.

It carries out the reaction 2-phosphoglycolate + H2O = glycolate + phosphate. Its function is as follows. Catalyzes the dephosphorylation of 2-phosphoglycolate. This chain is Phosphoglycolate phosphatase, found in Natronomonas pharaonis (strain ATCC 35678 / DSM 2160 / CIP 103997 / JCM 8858 / NBRC 14720 / NCIMB 2260 / Gabara) (Halobacterium pharaonis).